Reading from the N-terminus, the 85-residue chain is UPF0297 protein lhv_0439 (85 aa).

This sequence belongs to the UPF0297 family.

The chain is UPF0297 protein lhv_0439 from Lactobacillus helveticus (strain DPC 4571).